A 61-amino-acid chain; its full sequence is Metallothionein-2 (61 aa).

At Met1 the chain carries N-acetylmethionine. Positions 1 to 29 are beta; the sequence is MDPNCSCVAGDSCTCAGSCKCKECKCTSC. The a divalent metal cation site is built by Cys5, Cys7, Cys13, Cys15, Cys19, Cys21, Cys24, Cys26, Cys29, Cys33, Cys34, Cys36, Cys37, Cys41, Cys44, Cys48, Cys50, Cys57, Cys59, and Cys60. The antigenic epitope stretch occupies residues 20–25; it reads KCKECK. The interval 30-61 is alpha; it reads KKSCCSCCPVGCAKCAQGCICKGASDKCNCCA.

It belongs to the metallothionein superfamily. Type 1 family.

Functionally, metallothioneins have a high content of cysteine residues that bind various heavy metals; these proteins are transcriptionally regulated by both heavy metals and glucocorticoids. In Macaca fascicularis (Crab-eating macaque), this protein is Metallothionein-2 (MT2).